Here is a 687-residue protein sequence, read N- to C-terminus: Elongation factor G (687 aa).

The 275-residue stretch at 8–282 folds into the tr-type G domain; it reads NKFRNIGIMA…AVLAYLPSPL (275 aa). Residues 17–24, 81–85, and 135–138 contribute to the GTP site; these read AHIDAGKT, DTPGH, and NKMD.

The protein belongs to the TRAFAC class translation factor GTPase superfamily. Classic translation factor GTPase family. EF-G/EF-2 subfamily.

The protein localises to the cytoplasm. Functionally, catalyzes the GTP-dependent ribosomal translocation step during translation elongation. During this step, the ribosome changes from the pre-translocational (PRE) to the post-translocational (POST) state as the newly formed A-site-bound peptidyl-tRNA and P-site-bound deacylated tRNA move to the P and E sites, respectively. Catalyzes the coordinated movement of the two tRNA molecules, the mRNA and conformational changes in the ribosome. This is Elongation factor G from Clostridium novyi (strain NT).